A 187-amino-acid polypeptide reads, in one-letter code: Large ribosomal subunit protein eL18y (187 aa).

The disordered stretch occupies residues 151–187; that stretch reads FGPAPGVPHSHSKPYVRAKGRKFEKARGKRKSRGFKV. Composition is skewed to basic residues over residues 160-170 and 177-187; these read SHSKPYVRAKG and RGKRKSRGFKV.

This sequence belongs to the eukaryotic ribosomal protein eL18 family. Interacts with NIK1. Interacts directly with EXA1. Ubiquitous.

The protein localises to the cytoplasm. The polypeptide is Large ribosomal subunit protein eL18y (RPL18B) (Arabidopsis thaliana (Mouse-ear cress)).